A 443-amino-acid polypeptide reads, in one-letter code: C4-dicarboxylate transport protein (443 aa).

10 consecutive transmembrane segments (helical) span residues 10–30 (SLYF…HFYP), 46–66 (LIKM…IAGM), 78–98 (YALL…LIVV), 130–150 (SIVG…FANG), 152–172 (ILQV…LGAY), 199–219 (PLGA…GSLV), 224–244 (LMIC…GAIC), 291–311 (VVGL…SIYL), 332–352 (ITLL…TGSG), and 354–374 (IVLA…LALI). Positions 415–443 (ELASGGRPITDTRETDDLGVAEGPAPSIK) are disordered.

The protein belongs to the dicarboxylate/amino acid:cation symporter (DAACS) (TC 2.A.23) family.

It localises to the cell inner membrane. In terms of biological role, responsible for the transport of dicarboxylates such as succinate, fumarate, and malate from the periplasm across the membrane. This Pseudomonas fluorescens (strain ATCC BAA-477 / NRRL B-23932 / Pf-5) protein is C4-dicarboxylate transport protein.